Here is a 156-residue protein sequence, read N- to C-terminus: Movement protein P17 (156 aa).

The interval 38 to 54 (AEDVEEEAIAAQEELEF) is homodimerization. Residues 57 to 156 (DEAQARHSCL…RAAPKLIKRG (100 aa)) form an RNA-binding region. Phosphoserine is present on residues serine 71, serine 79, serine 137, and serine 140. The interval 106–156 (ASYFSSSARPLPPPPAPSLMSWTPIAKYHPSSPTSTSSKLRRAAPKLIKRG) is disordered. Residues 144 to 156 (KLRRAAPKLIKRG) are compositionally biased toward basic residues.

Belongs to the polerovirus movement protein family. Homodimer. In terms of processing, expressed as a nonphosphorylated 20kDa form and a phosphorylated 22kDa form. Phosphorylated by a host PKC-related kinase. Serine phosphorylation is required for plamodesma targeting.

Its subcellular location is the host cell junction. It localises to the host plasmodesma. The protein localises to the host chloroplast envelope. It is found in the host Golgi apparatus. The protein resides in the host mitochondrion outer membrane. Functionally, together with movement protein P3a, facilitates long-distance movement of virions in host. Transports viral genome to neighboring plant cells directly through plasmosdesmata, without any budding. The movement protein allows efficient cell to cell propagation, by bypassing the host cell wall barrier. Binds ssRNA. This Solanum tuberosum (Potato) protein is Movement protein P17.